The primary structure comprises 400 residues: Probable splicing factor YJU2B (400 aa).

A disordered region spans residues 1–26 (MGERKGVNKYYPPDFNPEKHGSLNRY). Position 40 is a phosphoserine (serine 40). Residues 182 to 214 (LNSMLRKRFREKKKAMQEEEERDQALQAKASLA) are a coiled coil. Residues 255–400 (WFPSTPGASA…VADYSGSESE (146 aa)) are disordered. The span at 283–292 (RRATPTSSPV) shows a compositional bias: polar residues. Serine 310 carries the phosphoserine modification. A compositionally biased stretch (polar residues) spans 327–341 (EGTNQNRPVSPQDCS). Residues 364–380 (PQPPPDTSPEAPNPQDT) show a composition bias toward pro residues.

The protein belongs to the CWC16 family.

The protein localises to the nucleus. In terms of biological role, may be involved in mRNA splicing. The protein is Probable splicing factor YJU2B (YJU2B) of Bos taurus (Bovine).